The chain runs to 299 residues: Trimeric intracellular cation channel type A (299 aa).

Residues 1–18 (MELLSALSLGELALSFSR) lie on the Lumenal side of the membrane. Residues 19–39 (VPLFPVFDLSYFIVSILYLKY) form a helical membrane-spanning segment. At 40 to 51 (EPGAVELSRRHP) the chain is on the cytoplasmic side. The helical transmembrane segment at 52–72 (IASWLCAMLHCFGSYILADLL) threads the bilayer. Over 73-85 (LGEPLIDYFSNNS) the chain is Lumenal. G74 lines the Ca(2+) pocket. The helical transmembrane segment at 86–106 (SILLASAVWYLIFFCPLDLFY) threads the bilayer. Topologically, residues 107 to 144 (KCVCFLPVKLIFVAMKEVVRVRKIAVGIHHAHHHYHHG) are cytoplasmic. Positions 122 and 126 each coordinate a 1,2-diacyl-sn-glycero-3-phospho-(1D-myo-inositol-4,5-bisphosphate). Residues 145–165 (WFVMIATGWVKGSGVALMSNF) traverse the membrane as a helical segment. The Lumenal segment spans residues 166-178 (EQLLRGVWKPETN). Residues 179-199 (EILHMSFPTKASLYGAILFTL) traverse the membrane as a helical segment. Over 200 to 209 (QQTRWLPVSK) the chain is Cytoplasmic. The chain crosses the membrane as a helical span at residues 210 to 230 (ASLIFIFTLFMVSCKVFLTAT). The Lumenal segment spans residues 231 to 234 (HSHS). A helical membrane pass occupies residues 235–255 (SPFDALEGYICPVLFGSACGG). Residues 256-299 (DHHHDNHGGSHSGGGPGAQHSAMPAKSKEELSEGSRKKKAKKAD) lie on the Cytoplasmic side of the membrane. Residues 260–299 (DNHGGSHSGGGPGAQHSAMPAKSKEELSEGSRKKKAKKAD) form a disordered region. Over residues 281–290 (KSKEELSEGS) the composition is skewed to basic and acidic residues.

Belongs to the TMEM38 family. In terms of assembly, homotrimer; conformation seems to be controled by binding to diacylglycerol (DAG).

The protein resides in the sarcoplasmic reticulum membrane. It localises to the nucleus membrane. It catalyses the reaction K(+)(in) = K(+)(out). Its activity is regulated as follows. Channel activity is activated by a change of voltage within the sarcoplasmic reticulum lumen and blocked by luminal high Ca(2+) levels. Functionally, intracellular monovalent cation channel required for maintenance of rapid intracellular calcium release. Acts as a potassium counter-ion channel that functions in synchronization with calcium release from intracellular stores. Opened by a change of voltage within the sarcoplasmic reticulum lumen. The chain is Trimeric intracellular cation channel type A from Homo sapiens (Human).